A 323-amino-acid polypeptide reads, in one-letter code: Magnesium transporter NIPA1 (323 aa).

Over 1–21 (MGTAAAAAAAGEGARGPSPAA) the chain is Extracellular. A helical membrane pass occupies residues 22–42 (VSLGLGVAVVSSLVNGSTFVL). Over 43–60 (QKKGIVRAKRRGTSYLTD) the chain is Cytoplasmic. A helical membrane pass occupies residues 61-81 (IVWWAGTIAMAVGQIGNFLAY). A topological domain (extracellular) is located at residue threonine 82. Residues 83-103 (AVPTVLVTPLGALGVPFGSIL) traverse the membrane as a helical segment. The Cytoplasmic portion of the chain corresponds to 104-111 (ASYLLKEK). Residues 112–132 (LNILGKLGCLLSCAGSVVLII) form a helical membrane-spanning segment. Residues 133 to 153 (HSPKSESVTTQAELEEKLTNP) are Extracellular-facing. The chain crosses the membrane as a helical span at residues 154-174 (VFVGYLCIVLLMLLLLIFWIA). The Cytoplasmic segment spans residues 175–177 (PAH). A helical membrane pass occupies residues 178-198 (GPTNIMVYISICSLLGSFTVP). At 199 to 218 (STKGIGLAAQDILHNNPSSQ) the chain is on the extracellular side. The chain crosses the membrane as a helical span at residues 219-239 (RALCLCLVLLAVLGCSIIVQF). At 240–253 (RYINKALECFDSSV) the chain is on the cytoplasmic side. Residues 254 to 274 (FGAIYYVVFTTLVLLASAILF) traverse the membrane as a helical segment. Topologically, residues 275–284 (REWSNVGLVD) are extracellular. Residues 285-305 (FLGMACGFTTVSVGIVLIQVF) form a helical membrane-spanning segment. Topologically, residues 306–323 (KEFNFNLGEMNKSNMKTD) are cytoplasmic.

This sequence belongs to the NIPA family. As to quaternary structure, homodimer. In terms of tissue distribution, widely expressed. Predominantly expressed in neuronal tissues. Brain, heart, kidney, liver and colon (at protein level).

Its subcellular location is the cell membrane. It is found in the early endosome. The enzyme catalyses Mg(2+)(in) = Mg(2+)(out). Acts as a Mg(2+) transporter. Can also transport other divalent cations such as Fe(2+), Sr(2+), Ba(2+), Zn(2+) and Co(2+) but to a much less extent than Mg(2+). This Mus musculus (Mouse) protein is Magnesium transporter NIPA1 (Nipa1).